Consider the following 294-residue polypeptide: 4-hydroxy-tetrahydrodipicolinate synthase (294 aa).

Threonine 47 lines the pyruvate pocket. Tyrosine 136 (proton donor/acceptor) is an active-site residue. Lysine 164 (schiff-base intermediate with substrate) is an active-site residue. Valine 206 is a binding site for pyruvate.

The protein belongs to the DapA family. Homotetramer; dimer of dimers.

The protein resides in the cytoplasm. It catalyses the reaction L-aspartate 4-semialdehyde + pyruvate = (2S,4S)-4-hydroxy-2,3,4,5-tetrahydrodipicolinate + H2O + H(+). It functions in the pathway amino-acid biosynthesis; L-lysine biosynthesis via DAP pathway; (S)-tetrahydrodipicolinate from L-aspartate: step 3/4. Its function is as follows. Catalyzes the condensation of (S)-aspartate-beta-semialdehyde [(S)-ASA] and pyruvate to 4-hydroxy-tetrahydrodipicolinate (HTPA). This chain is 4-hydroxy-tetrahydrodipicolinate synthase, found in Cyanothece sp. (strain PCC 7425 / ATCC 29141).